A 427-amino-acid polypeptide reads, in one-letter code: Adenylosuccinate synthetase (427 aa).

GTP is bound by residues 12-18 (GDEGKGK) and 40-42 (GHT). Asp-13 serves as the catalytic Proton acceptor. Mg(2+)-binding residues include Asp-13 and Gly-40. IMP contacts are provided by residues 13-16 (DEGK), 38-41 (NAGH), Thr-126, Arg-140, Gln-221, Thr-236, and Arg-299. Catalysis depends on His-41, which acts as the Proton donor. 295–301 (STTKRPR) lines the substrate pocket. Residues Arg-301, 327 to 329 (KLD), and 409 to 411 (SVG) contribute to the GTP site.

This sequence belongs to the adenylosuccinate synthetase family. In terms of assembly, homodimer. Requires Mg(2+) as cofactor.

It localises to the cytoplasm. It carries out the reaction IMP + L-aspartate + GTP = N(6)-(1,2-dicarboxyethyl)-AMP + GDP + phosphate + 2 H(+). The protein operates within purine metabolism; AMP biosynthesis via de novo pathway; AMP from IMP: step 1/2. Functionally, plays an important role in the de novo pathway of purine nucleotide biosynthesis. Catalyzes the first committed step in the biosynthesis of AMP from IMP. The chain is Adenylosuccinate synthetase from Borrelia duttonii (strain Ly).